Reading from the N-terminus, the 130-residue chain is MKVLGNILWWAFVGFMAYATLIKPDNTDPAVVNYEEPLPMELANYGEPGEGAKIMNAAKIMGRDYAWKHVKEDRLPCLFAAGVVADNILVKYHFSNETEFKLKAAAVRECANVAENNGFVLVGRVFEKRN.

An N-terminal signal peptide occupies residues 1–19; the sequence is MKVLGNILWWAFVGFMAYA.

This is an uncharacterized protein from Escherichia coli (strain K12).